We begin with the raw amino-acid sequence, 1212 residues long: MGITRRGKDKAAAGQAVAGGASGGRARPKKATFETSKKKDVGVSDLTLLSKVSNEAINENLQKRFEGREIYTYIGHVLVSVNPFRDLGIYTDQVLDSYKGKNRLEMPPHVFAIAESAYYNMKAYKDNQCVIISGESGAGKTEAAKRIMQYIASVSGGDSTDIQQIKDMVLATNPLLESFGNAKTLRNNNSSRFGKYLQIHFNSVGEPVGADITNYLLEKSRVVGQITNERNFHIFYQFTKGASEHYRQMFGIQKPETYIYTSRSKCLDVDGIDDLAEFQDTLNAMKVIGLSQEEQDSVFRILAAILWTGNLVFREDDEGYAAVTDQSVVEFLAYLLEVDPQQLIKAITIRILTPRSGEVIESPANVAQAMATRDALAKSLYNNLFDWIVERINQSLKARQPTSNSVGILDIYGFEIFEKNSFEQLCINYVNEKLQQIFIQLTLKAEQDEYAREQIKWTPIKYFDNKIVCDLIESVRPPGVFSALKDATKTAHADPAACDRTFMQSVNGMSNAHLIPRQGSFIIKHYAGDVAYTVDGITDKNKDQLLKGLLGMFQVSQNPFLHTLFPNQVDQDNRKQPPTAGDRIRTSANALVETLMKCQPSYIRTIKPNENKSPTEYNVPNVLHQIKYLGLQENVRIRRAGFAYRQSFEKFVDRFFLLSPATSYAGEYTWQGSYEAAVKQILKDTSIPQEEWQMGVTKAFIKSPETLFALEHMRDRYWHNMATRIQRMWRAYLAYRAESATRIQTFWRKKRTGAEYLQLRDHGHRVLQGRKERRRMSILGSRRFIGDYLGINASSGPGAHIRNAIGIGSNEKTVFSCRGEILEAKFGRSSKASPRILIVTNSKFYVVAQMLVNGQVQITAEKAIPLGAIKFIGASSSRDDWFSLGVGSPQEADPLLNCVLKTEMFTQMERVMPGGFNLKIGDSIEYAKKPGKMQVVKVLKDSPNPVDFYKSGAVHTQQGEPPNSVSRPTPKGKPVPPRPITRGKLIRPGGPNGRPARGTTNRTPQPRPGGASASAVASRPVPQAQPQAQAQVAASIPVRTQQQSQTSSASVRAPPPPPPAAPPAKAKIMAKVLYDFAGQKENEMSIKEGDLIEIVQKENNGWWLAKSGNQQAWVPAAYVEEQKQAPPPVAASRPPPPAPPAANGKNKPLPPAKRPAAGKKPASLQPRDSGMSLNGSDGSRSNTPTPSLGNSLADALLARKQAMAKKDDDDDW.

Residues 1 to 35 (MGITRRGKDKAAAGQAVAGGASGGRARPKKATFET) are disordered. The Myosin motor domain maps to 41-715 (VGVSDLTLLS…TLFALEHMRD (675 aa)). ATP is bound at residue 134-141 (GESGAGKT). Residues 405-487 (SVGILDIYGF…PGVFSALKDA (83 aa)) are actin-binding. IQ domains follow at residues 719-739 (HNMA…RAES) and 740-765 (ATRI…HGHR). The region spanning 773 to 962 (RRRMSILGSR…AVHTQQGEPP (190 aa)) is the TH1 domain. Disordered stretches follow at residues 947 to 1064 (DFYK…APPA) and 1115 to 1212 (PAAY…DDDW). The segment covering 954–966 (VHTQQGEPPNSVS) has biased composition (polar residues). Low complexity-rich tracts occupy residues 987–998 (RPGGPNGRPARG) and 1008–1052 (PGGA…ASVR). Positions 1053 to 1062 (APPPPPPAAP) are enriched in pro residues. The region spanning 1065–1124 (KAKIMAKVLYDFAGQKENEMSIKEGDLIEIVQKENNGWWLAKSGNQQAWVPAAYVEEQKQ) is the SH3 domain. Residues 1125–1140 (APPPVAASRPPPPAPP) show a composition bias toward pro residues. Positions 1171 to 1190 (MSLNGSDGSRSNTPTPSLGN) are enriched in polar residues.

This sequence belongs to the TRAFAC class myosin-kinesin ATPase superfamily. Myosin family.

Its subcellular location is the cytoplasm. The protein localises to the cytoskeleton. It localises to the actin patch. Its function is as follows. Type-I myosin implicated in the organization of the actin cytoskeleton. Required for proper actin cytoskeleton polarization. At the cell cortex, assembles in patch-like structures together with proteins from the actin-polymerizing machinery and promotes actin assembly. Functions as actin nucleation-promoting factor (NPF) for the Arp2/3 complex. The protein is Myosin-1 (MYO1) of Pyricularia oryzae (strain 70-15 / ATCC MYA-4617 / FGSC 8958) (Rice blast fungus).